Reading from the N-terminus, the 92-residue chain is Integration host factor subunit beta (92 aa).

It belongs to the bacterial histone-like protein family. As to quaternary structure, heterodimer of an alpha and a beta chain.

Its function is as follows. This protein is one of the two subunits of integration host factor, a specific DNA-binding protein that functions in genetic recombination as well as in transcriptional and translational control. The protein is Integration host factor subunit beta of Azotobacter vinelandii (strain DJ / ATCC BAA-1303).